Here is a 52-residue protein sequence, read N- to C-terminus: Large ribosomal subunit protein bL33 (52 aa).

The protein belongs to the bacterial ribosomal protein bL33 family.

In Campylobacter jejuni subsp. jejuni serotype O:6 (strain 81116 / NCTC 11828), this protein is Large ribosomal subunit protein bL33.